The sequence spans 176 residues: Retinol-binding protein 4-B (176 aa).

At Ser-1 the chain carries N-acetylserine. Cystine bridges form between Cys-3-Cys-159, Cys-69-Cys-173, and Cys-119-Cys-128. Gln-97 provides a ligand contact to substrate.

It belongs to the calycin superfamily. Lipocalin family.

The protein resides in the secreted. In terms of biological role, RBP delivers retinol from the liver stores to the peripheral tissues. In plasma, the RBP-retinol complex interacts with transthyretin, this prevents its loss by filtration through the kidney glomeruli. This chain is Retinol-binding protein 4-B (rbp4b), found in Oncorhynchus mykiss (Rainbow trout).